A 446-amino-acid polypeptide reads, in one-letter code: Tubulin beta-1 chain (446 aa).

The short motif at 1–4 (MREI) is the MREI motif element. Residues Gln-11, Glu-69, Ser-138, Gly-142, Thr-143, Gly-144, Asn-204, and Asn-226 each coordinate GTP. Glu-69 contacts Mg(2+). The disordered stretch occupies residues 426–446 (QDATAEEEGEFEEEGEYEDGA). Acidic residues predominate over residues 429 to 446 (TAEEEGEFEEEGEYEDGA). A 5-glutamyl polyglutamate modification is found at Glu-438.

Belongs to the tubulin family. Dimer of alpha and beta chains. A typical microtubule is a hollow water-filled tube with an outer diameter of 25 nm and an inner diameter of 15 nM. Alpha-beta heterodimers associate head-to-tail to form protofilaments running lengthwise along the microtubule wall with the beta-tubulin subunit facing the microtubule plus end conferring a structural polarity. Microtubules usually have 13 protofilaments but different protofilament numbers can be found in some organisms and specialized cells. Mg(2+) serves as cofactor. Some glutamate residues at the C-terminus are polyglycylated, resulting in polyglycine chains on the gamma-carboxyl group. Glycylation is mainly limited to tubulin incorporated into axonemes (cilia and flagella) whereas glutamylation is prevalent in neuronal cells, centrioles, axonemes, and the mitotic spindle. Both modifications can coexist on the same protein on adjacent residues, and lowering polyglycylation levels increases polyglutamylation, and reciprocally. The precise function of polyglycylation is still unclear. In terms of processing, some glutamate residues at the C-terminus are polyglutamylated, resulting in polyglutamate chains on the gamma-carboxyl group. Polyglutamylation plays a key role in microtubule severing by spastin (SPAST). SPAST preferentially recognizes and acts on microtubules decorated with short polyglutamate tails: severing activity by SPAST increases as the number of glutamates per tubulin rises from one to eight, but decreases beyond this glutamylation threshold. As to expression, brain.

The protein resides in the cytoplasm. The protein localises to the cytoskeleton. In terms of biological role, tubulin is the major constituent of microtubules, a cylinder consisting of laterally associated linear protofilaments composed of alpha- and beta-tubulin heterodimers. Microtubules grow by the addition of GTP-tubulin dimers to the microtubule end, where a stabilizing cap forms. Below the cap, tubulin dimers are in GDP-bound state, owing to GTPase activity of alpha-tubulin. In Notothenia neglecta (Yellowbelly rockcod), this protein is Tubulin beta-1 chain (tubb1).